Here is a 59-residue protein sequence, read N- to C-terminus: Large ribosomal subunit protein uL30 (59 aa).

This sequence belongs to the universal ribosomal protein uL30 family. Part of the 50S ribosomal subunit.

This chain is Large ribosomal subunit protein uL30, found in Herminiimonas arsenicoxydans.